The chain runs to 380 residues: Cystathionine gamma-synthase (380 aa).

Residue Lys-195 is modified to N6-(pyridoxal phosphate)lysine.

The protein belongs to the trans-sulfuration enzymes family. In terms of assembly, homotetramer. It depends on pyridoxal 5'-phosphate as a cofactor.

The protein resides in the cytoplasm. The enzyme catalyses O-succinyl-L-homoserine + L-cysteine = L,L-cystathionine + succinate + H(+). Its function is as follows. Catalyzes the formation of L-cystathionine from O-succinyl-L-homoserine (OSHS) and L-cysteine, via a gamma-replacement reaction. In the absence of thiol, catalyzes gamma-elimination to form 2-oxobutanoate, succinate and ammonia. The polypeptide is Cystathionine gamma-synthase (metB) (Helicobacter pylori (strain J99 / ATCC 700824) (Campylobacter pylori J99)).